Reading from the N-terminus, the 1344-residue chain is DEAD-box ATP-dependent RNA helicase FANCM (1344 aa).

The segment at 39 to 61 is disordered; it reads SSSHFTPLANPPITANLTKPPAK. In terms of domain architecture, Helicase ATP-binding spans 124-292; it reads ITKTALFSNT…GIIDNLQIST (169 aa). An ATP-binding site is contributed by 137–144; the sequence is LPTGLGKT. The DEAH box signature appears at 240 to 243; sequence DEAH. Positions 450-621 constitute a Helicase C-terminal domain; that stretch reads KLSKMLEILV…SFNFHPSPRM (172 aa). Disordered stretches follow at residues 765 to 790, 1110 to 1148, 1183 to 1218, and 1307 to 1344; these read VNTS…KDYE, EVSS…TQAE, YSAG…SNQD, and KQRS…LGLW. The span at 1118–1135 shows a compositional bias: acidic residues; that stretch reads SADENEDVTGDSFEDSFI. Residues 1207-1218 show a composition bias toward polar residues; that stretch reads TPKTTNSESNQD. Basic and acidic residues predominate over residues 1308–1318; it reads QRSEAKEKEDA.

Belongs to the DEAD box helicase family. DEAH subfamily. FANCM sub-subfamily.

It is found in the nucleus. It catalyses the reaction ATP + H2O = ADP + phosphate + H(+). Its function is as follows. Involved in ordered homologous recombination (HR) events in somatic and meiotic cells. Involved in the suppression of spontaneous HR events in somatic cells. Has an opposite function to the DNA binding cofactor MHF1 which promotes spontaneous HR. Functions in replicative repair independently of MHF1 and in a parallel pathway to the endonuclease MUS81. Acts in the same pathway as the two DNA-binding cofactors MHF1 and MHF2 to restrain class II meiotic crossover (CO), and acts exclusively with MHF1 and MHF2 during meiosis to repair DNA interstrand cross-links (ICLs). This common pathway is in parallel to the pathway that involves the RECQ4A helicase. Seems to be involved in the stabilization of recombination intermediates. Involved in DNA double-strand break (DSB) repair during meiosis. Required for synthesis-dependent strand annealing (SDSA) and to a lesser extent for single-strand annealing (SSA). May process meiotic DSB repair intermediates, possibly D-loops, driving them toward noncrossover (NCO) resolution. This is DEAD-box ATP-dependent RNA helicase FANCM from Arabidopsis thaliana (Mouse-ear cress).